The chain runs to 284 residues: Tropomyosin (284 aa).

Residues 1-280 are a coiled coil; that stretch reads MDAIKKKMQA…SDELDQTFAE (280 aa).

It belongs to the tropomyosin family. As to quaternary structure, homodimer.

In terms of biological role, tropomyosin, in association with the troponin complex, plays a central role in the calcium dependent regulation of muscle contraction. The protein is Tropomyosin of Sinonovacula constricta (Razor clam).